The following is an 86-amino-acid chain: Large ribosomal subunit protein uL23c (86 aa).

This sequence belongs to the universal ribosomal protein uL23 family. In terms of assembly, part of the 50S ribosomal subunit.

Its subcellular location is the plastid. It localises to the chloroplast. Its function is as follows. Binds to 23S rRNA. In Chlorella vulgaris (Green alga), this protein is Large ribosomal subunit protein uL23c (rpl23).